We begin with the raw amino-acid sequence, 215 residues long: Large ribosomal subunit protein uL3 (215 aa).

N5-methylglutamine is present on glutamine 153.

This sequence belongs to the universal ribosomal protein uL3 family. In terms of assembly, part of the 50S ribosomal subunit. Forms a cluster with proteins L14 and L19. In terms of processing, methylated by PrmB.

One of the primary rRNA binding proteins, it binds directly near the 3'-end of the 23S rRNA, where it nucleates assembly of the 50S subunit. The chain is Large ribosomal subunit protein uL3 from Nitrosococcus oceani (strain ATCC 19707 / BCRC 17464 / JCM 30415 / NCIMB 11848 / C-107).